Here is an 88-residue protein sequence, read N- to C-terminus: Putative regulatory protein Npun_R3866 (88 aa).

It belongs to the RemA family.

This is Putative regulatory protein Npun_R3866 from Nostoc punctiforme (strain ATCC 29133 / PCC 73102).